We begin with the raw amino-acid sequence, 1153 residues long: PPi-type phosphoenolpyruvate carboxykinase 3 (1153 aa).

Positions 1085–1131 form a coiled coil; sequence RQKLEVAKLNKDLAYLNKTIAEKPRLAETLNKQIAAVKEELQYVSSE.

The protein belongs to the PPi-type phosphoenolpyruvate carboxykinase family. Monomer and trimer; forms heterotrimers with PEPCK1 and PEPCK2.

It is found in the cytoplasm. The protein resides in the cytosol. The catalysed reaction is oxaloacetate + diphosphate = phosphoenolpyruvate + phosphate + CO2. Inorganic pyrophosphate (PPi)-dependent phosphoenolpyruvate carboxykinase, which regulates the carbon flow of the central metabolism by fixing CO(2) to phosphoenolpyruvate to produce oxaloacetate. Can also produce pyruvate and diphosphate from phosphoenolpyruvate and phosphate. The chain is PPi-type phosphoenolpyruvate carboxykinase 3 from Entamoeba histolytica (strain ATCC 30459 / HM-1:IMSS / ABRM).